The sequence spans 150 residues: Lymphocyte antigen 6 complex locus protein G5c (150 aa).

Residues 1–41 (MRFMAGPAGSQSLGPLCFHSSPQALYTVLLIVLVMMSLVFG) form the signal peptide. Residues 60–150 (LRCYRCLLET…DPQNRGLYTP (91 aa)) enclose the UPAR/Ly6 domain. Intrachain disulfides connect C62/C89, C65/C74, C81/C107, and C134/C139. Residue N96 is glycosylated (N-linked (GlcNAc...) asparagine).

In terms of assembly, forms oligomers. N-glycosylated. In terms of tissue distribution, detected in T-cell lines and fetal and adult lung.

The protein localises to the secreted. May have a role in hematopoietic cell differentiation. The chain is Lymphocyte antigen 6 complex locus protein G5c (LY6G5C) from Homo sapiens (Human).